The chain runs to 608 residues: UvrABC system protein C (608 aa).

The 79-residue stretch at 13–91 (HDPGVYRMFD…IKTFQPRYNV (79 aa)) folds into the GIY-YIG domain. The region spanning 201–236 (QQVLDHLIGKMERASRALNFEEAARYRDQIQAVRSV) is the UVR domain.

It belongs to the UvrC family. Interacts with UvrB in an incision complex.

It localises to the cytoplasm. In terms of biological role, the UvrABC repair system catalyzes the recognition and processing of DNA lesions. UvrC both incises the 5' and 3' sides of the lesion. The N-terminal half is responsible for the 3' incision and the C-terminal half is responsible for the 5' incision. The chain is UvrABC system protein C from Mannheimia succiniciproducens (strain KCTC 0769BP / MBEL55E).